The sequence spans 503 residues: Maturase K (503 aa).

Belongs to the intron maturase 2 family. MatK subfamily.

It is found in the plastid. It localises to the chloroplast. Usually encoded in the trnK tRNA gene intron. Probably assists in splicing its own and other chloroplast group II introns. The chain is Maturase K from Vicia sativa (Spring vetch).